Here is a 487-residue protein sequence, read N- to C-terminus: NADH-quinone oxidoreductase subunit N (487 aa).

14 helical membrane passes run 8–28, 35–55, 78–98, 104–124, 125–145, 159–179, 203–223, 235–255, 271–291, 297–317, 328–348, 376–396, 409–428, and 451–471; these read LIAMLPLLIVGLTVVVVMLSI, FINATLTVIGLNLALLSLYFV, GLVIIASLATSTFAYPWLVGY, EFYLLVLIAALGGILLASANH, LASLFLGIELLTLPLFGLIGY, YMLLSAAASSFLLFGMALLYA, ILAGLGMMIVGLGFKLSLVPF, PAPVSTFLATASKIAIFAVVM, LVLSIIAVASILFGNLMAISQ, LLGYSSIAHLGYLLIALVAVQ, IGVYLAGYLFSSLGAFGVVSL, AVMTVMMLSLAGIPMTLGFIG, LWWLTGAVVLGSAIGLYYYL, and ALTAGGVVVLISAILVLVLGI.

It belongs to the complex I subunit 2 family. NDH-1 is composed of 13 different subunits. Subunits NuoA, H, J, K, L, M, N constitute the membrane sector of the complex.

Its subcellular location is the cell inner membrane. It carries out the reaction a quinone + NADH + 5 H(+)(in) = a quinol + NAD(+) + 4 H(+)(out). Its function is as follows. NDH-1 shuttles electrons from NADH, via FMN and iron-sulfur (Fe-S) centers, to quinones in the respiratory chain. The immediate electron acceptor for the enzyme in this species is believed to be ubiquinone. Couples the redox reaction to proton translocation (for every two electrons transferred, four hydrogen ions are translocated across the cytoplasmic membrane), and thus conserves the redox energy in a proton gradient. The protein is NADH-quinone oxidoreductase subunit N of Yersinia pseudotuberculosis serotype O:1b (strain IP 31758).